The primary structure comprises 543 residues: CTP synthase (543 aa).

Residues M1 to L265 form an amidoligase domain region. S13 lines the CTP pocket. S13 is a UTP binding site. ATP contacts are provided by residues S14–I19 and D71. 2 residues coordinate Mg(2+): D71 and E139. CTP contacts are provided by residues D146 to E148, K186 to Q191, and K222. Residues K186–Q191 and K222 each bind UTP. Positions T290–K541 constitute a Glutamine amidotransferase type-1 domain. Residue G351 coordinates L-glutamine. Residue C378 is the Nucleophile; for glutamine hydrolysis of the active site. Residues L379–Q382, E402, and R469 each bind L-glutamine. Active-site residues include H514 and E516.

It belongs to the CTP synthase family. Homotetramer.

It carries out the reaction UTP + L-glutamine + ATP + H2O = CTP + L-glutamate + ADP + phosphate + 2 H(+). The catalysed reaction is L-glutamine + H2O = L-glutamate + NH4(+). The enzyme catalyses UTP + NH4(+) + ATP = CTP + ADP + phosphate + 2 H(+). The protein operates within pyrimidine metabolism; CTP biosynthesis via de novo pathway; CTP from UDP: step 2/2. Allosterically activated by GTP, when glutamine is the substrate; GTP has no effect on the reaction when ammonia is the substrate. The allosteric effector GTP functions by stabilizing the protein conformation that binds the tetrahedral intermediate(s) formed during glutamine hydrolysis. Inhibited by the product CTP, via allosteric rather than competitive inhibition. Its function is as follows. Catalyzes the ATP-dependent amination of UTP to CTP with either L-glutamine or ammonia as the source of nitrogen. Regulates intracellular CTP levels through interactions with the four ribonucleotide triphosphates. In Ectopseudomonas mendocina (strain ymp) (Pseudomonas mendocina), this protein is CTP synthase.